Consider the following 121-residue polypeptide: Large ribosomal subunit protein uL14 (121 aa).

This sequence belongs to the universal ribosomal protein uL14 family. In terms of assembly, part of the 50S ribosomal subunit. Forms a cluster with proteins L3 and L19. In the 70S ribosome, L14 and L19 interact and together make contacts with the 16S rRNA in bridges B5 and B8.

Its function is as follows. Binds to 23S rRNA. Forms part of two intersubunit bridges in the 70S ribosome. This Pseudoalteromonas atlantica (strain T6c / ATCC BAA-1087) protein is Large ribosomal subunit protein uL14.